The primary structure comprises 1196 residues: Calcium-activated potassium channel subunit alpha-1 (1196 aa).

Topologically, residues 1 to 52 are extracellular; the sequence is MATWNASQIILNSMSNIIESPQSKPRPVMASNGASLFIPVTMEVPCDQGTRM. Residues 53 to 73 form a helical membrane-spanning segment; the sequence is WWAFLASSMVTFFGGLFIILV. The Cytoplasmic portion of the chain corresponds to 74–146; that stretch reads WRTFKYLWTV…MISAQTLTGR (73 aa). Residues 147-167 form a helical membrane-spanning segment; it reads VLVVTVFALSIGALMIYFIDS. The Extracellular portion of the chain corresponds to 168-182; sequence SNPIESCQNFYKDFT. Residues 183-203 traverse the membrane as a helical segment; the sequence is LQIDMAFNIFFLLYFGLRFIA. At 204–207 the chain is on the cytoplasmic side; the sequence is ANDK. Residues 208 to 228 form a helical membrane-spanning segment; sequence LWFWLEVNSVVDFFTVPPVFV. The Extracellular portion of the chain corresponds to 229–232; that stretch reads SVYL. A helical; Voltage-sensor membrane pass occupies residues 233–253; the sequence is NRSWLGLRFLRALRLIQFSEI. The Cytoplasmic segment spans residues 254-268; sequence LQFLNILKTSNSIKL. Residues 269–289 form a helical membrane-spanning segment; that stretch reads VNLCSIFISTWLTAAGFIHLV. The Extracellular segment spans residues 290–303; the sequence is ENSGDPWRNFENSQ. Residues 304–326 constitute an intramembrane region (pore-forming); that stretch reads DLSYWECMYLLMVTMSTVGYGDV. Residues 320-323 carry the Selectivity for potassium motif; that stretch reads TVGY. The Extracellular portion of the chain corresponds to 327 to 335; it reads YAKTTLGRL. Residues 336 to 356 traverse the membrane as a helical segment; sequence FMVFFILGGLAMFASYVPEII. Over 357–1196 the chain is Cytoplasmic; it reads ELIGNRKKYG…PPIREVEDEC (840 aa). An RCK N-terminal 1 domain is found at 375 to 517; the sequence is RKHIVVCGHI…WNWKDGDDAI (143 aa). Glu407, Gln430, and Glu432 together coordinate Mg(2+). The segment at 524-544 is segment S7; that stretch reads LGFIAQSCLAQGLSTMLANLF. The interval 581–601 is segment S8; sequence LSFPAVCELCFVKLKLLMIAI. Residues 645–649 form a heme-binding motif region; sequence CKACH. Positions 672–697 are disordered; that stretch reads SALSPKKKQRNGGMRHSPNTSPNMMR. The segment at 748–768 is segment S9; sequence VLSGHVVVCIFGDMTSALIGV. The 145-residue stretch at 750-894 folds into the RCK N-terminal 2 domain; that stretch reads SGHVVVCIFG…MERSSPDNSP (145 aa). A Calcium bowl motif is present at residues 914–936; it reads TELVNDSNVQFLDQDDDDDPDTE. The Ca(2+) site is built by Gln923, Asp926, Asp929, and Asp931. Positions 943–963 are segment S10; that stretch reads FACGTAFAVSVLDSLMSATYF. Residues 1098 to 1119 are compositionally biased toward low complexity; sequence ASLSHSSHSSHSSSKKSSSVTS. Residues 1098–1149 form a disordered region; it reads ASLSHSSHSSHSSSKKSSSVTSILHTASANRQNRVKARDSRDKQKMGQAEKK. The segment covering 1120 to 1129 has biased composition (polar residues); it reads ILHTASANRQ. A compositionally biased stretch (basic and acidic residues) spans 1133 to 1149; that stretch reads KARDSRDKQKMGQAEKK.

The protein belongs to the potassium channel family. Calcium-activated (TC 1.A.1.3) subfamily. KCa1.1/KCNMA1 sub-subfamily. As to quaternary structure, homotetramer; which constitutes the calcium-activated potassium channel. As to expression, expressed in both the somites and neural tube of 1 day embryos. Within the nervous system, it is restricted to dorsal parts, and expressed centrally in regions dedicated to processing of sensory information. Six hours later, it is expressed segmentally within the somites. At this time, it is expressed in a primary sensory organ, the trigeminal ganglion. By 2 days, it is also expressed in other primary sensory organs, such as the otic vesicle, and the eye. Within the retina, it is expressed to an internal layer. In the developing otic vesicle, it is abundantly expressed near the apical surface. Isoform 3 is neural-specific, and is only expressed during late stages of neuronal differentiation.

The protein localises to the cell membrane. The enzyme catalyses K(+)(in) = K(+)(out). With respect to regulation, ethanol and carbon monoxide-bound heme increase channel activation. Heme inhibits channel activation. Potassium channel activated by both membrane depolarization or increase in cytosolic Ca(2+) that mediates export of K(+). It is also activated by the concentration of cytosolic Mg(2+). Its activation dampens the excitatory events that elevate the cytosolic Ca(2+) concentration and/or depolarize the cell membrane. It therefore contributes to repolarization of the membrane potential. Plays a key role in controlling excitability in a number of systems, such as regulation of the contraction of smooth muscle, the tuning of hair cells in the cochlea, regulation of transmitter release, and innate immunity. In smooth muscles, its activation by high level of Ca(2+), caused by ryanodine receptors in the sarcoplasmic reticulum, regulates the membrane potential. In cochlea cells, its number and kinetic properties partly determine the characteristic frequency of each hair cell and thereby helps to establish a tonotopic map. Highly sensitive to both iberiotoxin (IbTx) and charybdotoxin (CTX). In Xenopus laevis (African clawed frog), this protein is Calcium-activated potassium channel subunit alpha-1 (kcnma1).